The following is a 738-amino-acid chain: Prolyl oligopeptidase A (738 aa).

Active-site charge relay system residues include Ser581, Asp665, and His701.

This sequence belongs to the peptidase S9A family. Monomer.

It catalyses the reaction Hydrolysis of Pro-|-Xaa &gt;&gt; Ala-|-Xaa in oligopeptides.. Its function is as follows. Housekeeping prolyl oligopeptidase (POP) that behaves like a conventional POP by cleaving peptide bonds on the C-terminal side of prolyl residues within peptides that are up to approximately 30 amino acids long. This chain is Prolyl oligopeptidase A, found in Galerina marginata (strain CBS 339.88).